A 621-amino-acid polypeptide reads, in one-letter code: MSEEYKKRILIQYENYLLQQDNYVYLATKNSVNWSRNKITPGTAFMNKLVNYLKSDQIQSLLNTNRQDMNIIITDMYEVGEGEKKIVNYVHKYLHNTSDTVMVYSPDADVILLCMLMPVSNLYMLRHNQETSKKFKRNIYDLINIKMLKNNISYYINNNPDFSRENFIVDNINYDLVCISTLFGNDFVPKIETINVKKGFQNIMDAYLKTLIELKERNTYLVRKVNGKFNLSLTFLRRVIKNLLPEENDYIKHNKLYNTYVTAGQIKNVFSYMEINSENIVSVYNEFMREYGDLKNLIKNNGNLTYFETNDQFMNSLKKSICIIMDDQCVNTSYLSNKDTIKLLRNYYIKTREFPRVNINLNTWSHSTDDRRHRNIIRENNYNKYQIEIYKFDKMLDEYYVKFNAQPLDLSRNKIEQFYETYFGIILLDKNKNLTEEANEIMRDYTEGLLWVFDYYFNDKTYVNRWYYQHEKAPLLTHLSMYLDGINHDYFNDLLSGLKKYRVKNIKNFFNPVEQLIYVSPMIPGIIKLLPSNYRSYITSDHLDPFLKTYFIDVEEIVDQLWDQKISDEIDCRSIPYLNKCIIKSIEKPSSSEDKLFLTAIRKVKPTATSHKRSKSIEPDF.

Belongs to the 5'-3' exonuclease family.

The protein localises to the virion. The sequence is that of Putative 5'-3' exonuclease R528 from Acanthamoeba polyphaga mimivirus (APMV).